We begin with the raw amino-acid sequence, 308 residues long: Ribosomal RNA small subunit methyltransferase H (308 aa).

Residues 34-36, aspartate 54, phenylalanine 80, aspartate 101, and glutamine 108 contribute to the S-adenosyl-L-methionine site; that span reads GGH.

This sequence belongs to the methyltransferase superfamily. RsmH family.

Its subcellular location is the cytoplasm. It catalyses the reaction cytidine(1402) in 16S rRNA + S-adenosyl-L-methionine = N(4)-methylcytidine(1402) in 16S rRNA + S-adenosyl-L-homocysteine + H(+). Functionally, specifically methylates the N4 position of cytidine in position 1402 (C1402) of 16S rRNA. The protein is Ribosomal RNA small subunit methyltransferase H of Ureaplasma parvum serovar 3 (strain ATCC 27815 / 27 / NCTC 11736).